Consider the following 421-residue polypeptide: Diaminopimelate decarboxylase (421 aa).

Lysine 62 is modified (N6-(pyridoxal phosphate)lysine). Pyridoxal 5'-phosphate is bound by residues glycine 237 and 279–282 (EPGR). Substrate is bound by residues arginine 282, arginine 319, and tyrosine 323. The active-site Proton donor is cysteine 349. Residues glutamate 350 and tyrosine 379 each coordinate substrate. Tyrosine 379 serves as a coordination point for pyridoxal 5'-phosphate.

It belongs to the Orn/Lys/Arg decarboxylase class-II family. LysA subfamily. Homodimer. The cofactor is pyridoxal 5'-phosphate.

It catalyses the reaction meso-2,6-diaminopimelate + H(+) = L-lysine + CO2. It functions in the pathway amino-acid biosynthesis; L-lysine biosynthesis via DAP pathway; L-lysine from DL-2,6-diaminopimelate: step 1/1. Its function is as follows. Specifically catalyzes the decarboxylation of meso-diaminopimelate (meso-DAP) to L-lysine. Plays a role in beta-lactam antibiotic resistance. The protein is Diaminopimelate decarboxylase (lysA) of Staphylococcus aureus (strain COL).